Here is a 209-residue protein sequence, read N- to C-terminus: Mei4-dependent protein 1 (209 aa).

The first 22 residues, 1-22 (MLHATQLCYLLLFCFLPISISS), serve as a signal peptide directing secretion.

The protein resides in the secreted. This chain is Mei4-dependent protein 1 (mde1), found in Schizosaccharomyces pombe (strain 972 / ATCC 24843) (Fission yeast).